Here is a 127-residue protein sequence, read N- to C-terminus: Fluoride-specific ion channel FluC (127 aa).

Helical transmembrane passes span 1–21 (MMSYLIVFFGAGIGGMARHMV), 32–52 (EFPFGTLFINMLGSFLIGAVV), 71–91 (TGILGGFTTFSAFSLETVLLY), and 96–116 (VFLAASYAVASVTLSVGALLL). Na(+) is bound by residues glycine 75 and threonine 78.

The protein belongs to the fluoride channel Fluc/FEX (TC 1.A.43) family.

The protein resides in the cell inner membrane. It catalyses the reaction fluoride(in) = fluoride(out). With respect to regulation, na(+) is not transported, but it plays an essential structural role and its presence is essential for fluoride channel function. Fluoride-specific ion channel. Important for reducing fluoride concentration in the cell, thus reducing its toxicity. This Granulibacter bethesdensis (strain ATCC BAA-1260 / CGDNIH1) protein is Fluoride-specific ion channel FluC.